The following is a 1331-amino-acid chain: DNA replication ATP-dependent helicase/nuclease JHS1 (1331 aa).

The disordered stretch occupies residues 1-98 (MPPRKKPKSS…DMDQQLTEAS (98 aa)). The Nuclear localization signal signature appears at 2–8 (PPRKKPK). The span at 11 to 31 (ALKSNKQSSANHSSQPSTFGI) shows a compositional bias: polar residues. Over residues 40-52 (QNSQSTSNSHTST) the composition is skewed to low complexity. Positions 57-81 (DQQNVNGLASDTAVLTPQNPLGTSN) are enriched in polar residues. Basic and acidic residues predominate over residues 82–91 (EKPDESKDMD). A nuclease activity region spans residues 362–811 (ECALYLWDEW…CKLRTGDRVI (450 aa)). Positions 422, 666, 669, and 675 each coordinate [4Fe-4S] cluster. Positions 812-1331 (LRTEVSHLTV…LNLLPGDLKP (520 aa)) are helicase activity. The region spanning 924 to 1271 (NNDQRQAILK…VRSREKPRSS (348 aa)) is the UvrD-like helicase ATP-binding domain. 945-952 (GMPGTGKT) is a binding site for ATP.

Belongs to the DNA2/NAM7 helicase family. [4Fe-4S] cluster is required as a cofactor. In terms of tissue distribution, strongly expressed in meristems, including both root and shoot apical meristems (RAM and SAM). Also present in the vasculature and in young floral tissues.

It is found in the nucleus. Its subcellular location is the chromosome. It catalyses the reaction ATP + H2O = ADP + phosphate + H(+). Functionally, essential protein required during embryogenesis. Key enzyme involved in DNA replication and damage repair, shoot apical meristem (SAM) maintenance, and development. Involved in Okazaki fragments processing. Possesses different enzymatic activities, such as single-stranded DNA (ssDNA)-dependent ATPase, 5'-3' helicase and endonuclease activities. While the ATPase and endonuclease activities are well-defined and play a key role in Okazaki fragments processing and DSB repair, the 5'-3' DNA helicase activity is atypical: it cannot load onto its tracking strand internally and has an absolute free 5'-end requirement. The chain is DNA replication ATP-dependent helicase/nuclease JHS1 from Arabidopsis thaliana (Mouse-ear cress).